The chain runs to 191 residues: Chorion class B protein Ld10 (191 aa).

The N-terminal stretch at 1–21 is a signal peptide; that stretch reads MSAKIILVFCAQALFVQSALS.

The protein belongs to the chorion protein family.

In terms of biological role, this protein is one of many from the eggshell of the gypsy moth. The sequence is that of Chorion class B protein Ld10 from Lymantria dispar (Gypsy moth).